The sequence spans 183 residues: Shikimate kinase (183 aa).

15-20 (GSGKST) is a binding site for ATP. Ser-19 lines the Mg(2+) pocket. Substrate contacts are provided by Asp-37, Arg-61, and Gly-85. Arg-123 is a binding site for ATP. Substrate is bound at residue Arg-142.

The protein belongs to the shikimate kinase family. As to quaternary structure, monomer. The cofactor is Mg(2+).

It localises to the cytoplasm. The enzyme catalyses shikimate + ATP = 3-phosphoshikimate + ADP + H(+). Its pathway is metabolic intermediate biosynthesis; chorismate biosynthesis; chorismate from D-erythrose 4-phosphate and phosphoenolpyruvate: step 5/7. Functionally, catalyzes the specific phosphorylation of the 3-hydroxyl group of shikimic acid using ATP as a cosubstrate. This is Shikimate kinase from Paracidovorax citrulli (strain AAC00-1) (Acidovorax citrulli).